A 132-amino-acid chain; its full sequence is Large ribosomal subunit protein bL12 (132 aa).

The protein belongs to the bacterial ribosomal protein bL12 family. As to quaternary structure, homodimer. Part of the ribosomal stalk of the 50S ribosomal subunit. Forms a multimeric L10(L12)X complex, where L10 forms an elongated spine to which 2 to 4 L12 dimers bind in a sequential fashion. Binds GTP-bound translation factors.

In terms of biological role, forms part of the ribosomal stalk which helps the ribosome interact with GTP-bound translation factors. Is thus essential for accurate translation. The sequence is that of Large ribosomal subunit protein bL12 from Prochlorococcus marinus (strain MIT 9211).